Consider the following 78-residue polypeptide: Kassorin-S (78 aa).

Positions 1 to 22 (MLTLKKSMLLLFFLGMVSLSLA) are cleaved as a signal peptide. Residues 23–64 (NSKRADEEGEDKRADEEGEDKRADEEGEDKRADEEGEEKRKR) constitute a propeptide that is removed on maturation. The interval 24 to 60 (SKRADEEGEDKRADEEGEDKRADEEGEDKRADEEGEE) is disordered. A compositionally biased stretch (basic and acidic residues) spans 25–60 (KRADEEGEDKRADEEGEDKRADEEGEDKRADEEGEE). Position 77 is a leucine amide (Leu-77).

This sequence belongs to the frog skin active peptide (FSAP) family. Brevinin subfamily. As to expression, expressed by the skin glands.

Its subcellular location is the secreted. Its function is as follows. Antimicrobial peptide. Active against the Gram-positive bacterium S.aureus (MIC=30 uM) and the yeast C.albicans (MIC=100 uM). Not effective against the Gram-negative bacterium E.coli at concentrations up to 250 uM. Lacks ability to induce contraction of smooth muscle in isolated guinea pig urinary bladder. Elicits histamine release from rat peritoneal mast cells. The protein is Kassorin-S of Kassina senegalensis (Senegal running frog).